A 322-amino-acid chain; its full sequence is Formimidoylglutamase (322 aa).

Positions 130, 156, 158, 160, 245, and 247 each coordinate Mn(2+).

The protein belongs to the arginase family. The cofactor is Mn(2+).

It carries out the reaction N-formimidoyl-L-glutamate + H2O = formamide + L-glutamate. Its pathway is amino-acid degradation; L-histidine degradation into L-glutamate; L-glutamate from N-formimidoyl-L-glutamate (hydrolase route): step 1/1. Catalyzes the conversion of N-formimidoyl-L-glutamate to L-glutamate and formamide. The sequence is that of Formimidoylglutamase from Lysinibacillus sphaericus (strain C3-41).